The following is a 278-amino-acid chain: MAGEFRWQAGRPATAQVGGWVLAHCQQRFLQDDNGLLFPREWLKRQELPLLAEHGVGHWQGEPVYVLELDEPIELPGMAWAPLRQFMLHGDFDQFCMLGYASQIGIWARHNRFCGNCGTRMQAQDHERVMQCPQCGLHQYPRLSPSMIVLVTRGDEVLLARSPRFVPGVYSTLAGFVEAGESVEQCVVREVREEVGVEVANLEYIGSQNWPFPHSLMLGFHAEYVSGEIVPQEDEIEDAQWFSLDALPPLPAQRSIARHLIDLYLARRSGAAEPVLPG.

Arg-84 is a substrate binding site. The Zn(2+) site is built by Cys-114 and Cys-117. Glu-127 contributes to the substrate binding site. Cys-132 and Cys-135 together coordinate Zn(2+). Residue Tyr-140 participates in substrate binding. Positions 141-265 (PRLSPSMIVL…IARHLIDLYL (125 aa)) constitute a Nudix hydrolase domain. Ala-174, Glu-190, and Glu-194 together coordinate a divalent metal cation. Residues 175 to 196 (GFVEAGESVEQCVVREVREEVG) carry the Nudix box motif. Position 208-215 (208-215 (QNWPFPHS)) interacts with substrate. Glu-235 serves as a coordination point for a divalent metal cation. Ala-257 lines the substrate pocket.

This sequence belongs to the Nudix hydrolase family. NudC subfamily. As to quaternary structure, homodimer. Requires Mg(2+) as cofactor. The cofactor is Mn(2+). Zn(2+) is required as a cofactor.

It carries out the reaction a 5'-end NAD(+)-phospho-ribonucleoside in mRNA + H2O = a 5'-end phospho-adenosine-phospho-ribonucleoside in mRNA + beta-nicotinamide D-ribonucleotide + 2 H(+). The catalysed reaction is NAD(+) + H2O = beta-nicotinamide D-ribonucleotide + AMP + 2 H(+). The enzyme catalyses NADH + H2O = reduced beta-nicotinamide D-ribonucleotide + AMP + 2 H(+). Functionally, mRNA decapping enzyme that specifically removes the nicotinamide adenine dinucleotide (NAD) cap from a subset of mRNAs by hydrolyzing the diphosphate linkage to produce nicotinamide mononucleotide (NMN) and 5' monophosphate mRNA. The NAD-cap is present at the 5'-end of some mRNAs and stabilizes RNA against 5'-processing. Has preference for mRNAs with a 5'-end purine. Catalyzes the hydrolysis of a broad range of dinucleotide pyrophosphates. This Pseudomonas aeruginosa (strain ATCC 15692 / DSM 22644 / CIP 104116 / JCM 14847 / LMG 12228 / 1C / PRS 101 / PAO1) protein is NAD-capped RNA hydrolase NudC.